A 188-amino-acid polypeptide reads, in one-letter code: Probable nicotinate-nucleotide adenylyltransferase (188 aa).

The protein belongs to the NadD family.

The catalysed reaction is nicotinate beta-D-ribonucleotide + ATP + H(+) = deamido-NAD(+) + diphosphate. The protein operates within cofactor biosynthesis; NAD(+) biosynthesis; deamido-NAD(+) from nicotinate D-ribonucleotide: step 1/1. Functionally, catalyzes the reversible adenylation of nicotinate mononucleotide (NaMN) to nicotinic acid adenine dinucleotide (NaAD). This chain is Probable nicotinate-nucleotide adenylyltransferase, found in Listeria monocytogenes serotype 4b (strain F2365).